Here is a 459-residue protein sequence, read N- to C-terminus: tRNA modification GTPase MnmE (459 aa).

Residues Arg-23, Glu-88, and Arg-127 each coordinate (6S)-5-formyl-5,6,7,8-tetrahydrofolate. Residues Gly-223–Phe-381 enclose the TrmE-type G domain. Asn-233 is a binding site for K(+). GTP contacts are provided by residues Asn-233 to Ser-238, Thr-252 to Thr-258, and Asp-277 to Gly-280. Ser-237 provides a ligand contact to Mg(2+). K(+) is bound by residues Thr-252, Val-254, and Thr-257. Thr-258 contacts Mg(2+). Lys-459 is a (6S)-5-formyl-5,6,7,8-tetrahydrofolate binding site.

The protein belongs to the TRAFAC class TrmE-Era-EngA-EngB-Septin-like GTPase superfamily. TrmE GTPase family. Homodimer. Heterotetramer of two MnmE and two MnmG subunits. The cofactor is K(+).

The protein resides in the cytoplasm. In terms of biological role, exhibits a very high intrinsic GTPase hydrolysis rate. Involved in the addition of a carboxymethylaminomethyl (cmnm) group at the wobble position (U34) of certain tRNAs, forming tRNA-cmnm(5)s(2)U34. The protein is tRNA modification GTPase MnmE of Clostridium novyi (strain NT).